The sequence spans 264 residues: Thiazole synthase (264 aa).

Lysine 100 acts as the Schiff-base intermediate with DXP in catalysis. Residues glycine 161, 187 to 188 (AG), and 209 to 210 (NT) contribute to the 1-deoxy-D-xylulose 5-phosphate site.

It belongs to the ThiG family. In terms of assembly, homotetramer. Forms heterodimers with either ThiH or ThiS.

Its subcellular location is the cytoplasm. It carries out the reaction [ThiS sulfur-carrier protein]-C-terminal-Gly-aminoethanethioate + 2-iminoacetate + 1-deoxy-D-xylulose 5-phosphate = [ThiS sulfur-carrier protein]-C-terminal Gly-Gly + 2-[(2R,5Z)-2-carboxy-4-methylthiazol-5(2H)-ylidene]ethyl phosphate + 2 H2O + H(+). It functions in the pathway cofactor biosynthesis; thiamine diphosphate biosynthesis. In terms of biological role, catalyzes the rearrangement of 1-deoxy-D-xylulose 5-phosphate (DXP) to produce the thiazole phosphate moiety of thiamine. Sulfur is provided by the thiocarboxylate moiety of the carrier protein ThiS. In vitro, sulfur can be provided by H(2)S. This chain is Thiazole synthase, found in Nitrosospira multiformis (strain ATCC 25196 / NCIMB 11849 / C 71).